Consider the following 235-residue polypeptide: MVVEDSMKATSAEDLSNSIANQNPRGRGGDEDEELEEGEIVGDDDLDSSNLSASLVHQPHPLEHSWTFWFDNPSAKSKQATWGASIRPIYTFSTVEEFWSVYNNIHHPSKLAMRADLYCFKHKIEPKWEDPVCANGGKWTVNFPRGKSDNGWLYTLLAMIGEQFDCGDEICGAVVNVRSGQDKISIWTKNASNEAAQASIGKQWKEFLDYNESIGFIFHDDAKKFDRHAKNKYMV.

Positions 1–52 (MVVEDSMKATSAEDLSNSIANQNPRGRGGDEDEELEEGEIVGDDDLDSSNLS) are disordered. A compositionally biased stretch (polar residues) spans 13 to 24 (EDLSNSIANQNP). Residues 30–47 (DEDEELEEGEIVGDDDLD) are compositionally biased toward acidic residues. EIF4G-binding regions lie at residues 60–63 (HPLE) and 70–106 (FDNP…NNIH). MRNA is bound by residues 78–83 (KQATWG), K110, and 128–129 (WE). A disulfide bridge connects residues C133 and C171. An EIF4G-binding region spans residues 154 to 163 (YTLLAMIGEQ). MRNA is bound by residues 178-183 (RSGQDK) and 223-227 (KKFDR).

The protein belongs to the eukaryotic initiation factor 4E family. As to quaternary structure, EIF4F is a multi-subunit complex, the composition of which varies with external and internal environmental conditions. It is composed of at least EIF4A, EIF4E and EIF4G. EIF4E is also known to interact with other partners. Interacts directly with eIF4G. In higher plants two isoforms of EIF4F have been identified, named isoform EIF4F and isoform EIF(iso)4F. Isoform EIF4F has subunits p220 and p26, whereas isoform EIF(iso)4F has subunits p82 and p28. In terms of assembly, (Microbial infection) Interacts with potyvirus viral genome-linked protein (VPg); this interaction is possible in susceptible hosts but impaired in resistant plants. In terms of processing, according to the redox status, the Cys-133-Cys-171 disulfide bridge may have a role in regulating protein function by affecting its ability to bind capped mRNA.

The protein resides in the nucleus. Its subcellular location is the cytoplasm. Component of the protein complex eIF4F, which is involved in the recognition of the mRNA cap, ATP-dependent unwinding of 5'-terminal secondary structure and recruitment of mRNA to the ribosome. Recognizes and binds the 7-methylguanosine-containing mRNA cap during an early step in the initiation of protein synthesis and facilitates ribosome binding by inducing the unwinding of the mRNAs secondary structures. Key component of recessive resistance to potyviruses and Tombusviridae genus Carmovirus such as melon necrotic spot virus (MNSV). In terms of biological role, (Microbial infection) Susceptibility host factor required for viral infection by recruiting viral RNAs, including uncapped and non-polyadenylated RNA, to the host ribosomal complex via an interaction with viral genome-linked protein (VPg). In Cucumis melo (Muskmelon), this protein is Eukaryotic translation initiation factor 4E-1.